The sequence spans 416 residues: Serine hydroxymethyltransferase (416 aa).

(6S)-5,6,7,8-tetrahydrofolate contacts are provided by residues L117 and 121 to 123 (GHL). K226 bears the N6-(pyridoxal phosphate)lysine mark.

Belongs to the SHMT family. As to quaternary structure, homodimer. It depends on pyridoxal 5'-phosphate as a cofactor.

The protein localises to the cytoplasm. It catalyses the reaction (6R)-5,10-methylene-5,6,7,8-tetrahydrofolate + glycine + H2O = (6S)-5,6,7,8-tetrahydrofolate + L-serine. The protein operates within one-carbon metabolism; tetrahydrofolate interconversion. Its pathway is amino-acid biosynthesis; glycine biosynthesis; glycine from L-serine: step 1/1. In terms of biological role, catalyzes the reversible interconversion of serine and glycine with tetrahydrofolate (THF) serving as the one-carbon carrier. This reaction serves as the major source of one-carbon groups required for the biosynthesis of purines, thymidylate, methionine, and other important biomolecules. Also exhibits THF-independent aldolase activity toward beta-hydroxyamino acids, producing glycine and aldehydes, via a retro-aldol mechanism. This Leptospira biflexa serovar Patoc (strain Patoc 1 / Ames) protein is Serine hydroxymethyltransferase.